Reading from the N-terminus, the 522-residue chain is Protein nucleotidyltransferase YdiU (522 aa).

ATP contacts are provided by Gly-109, Gly-111, Arg-112, Lys-132, Asp-144, Gly-145, Arg-195, and Arg-202. The active-site Proton acceptor is Asp-271. Mg(2+)-binding residues include Asn-272 and Asp-281. Asp-281 is an ATP binding site.

The protein belongs to the SELO family. The cofactor is Mg(2+). Mn(2+) serves as cofactor.

The catalysed reaction is L-seryl-[protein] + ATP = 3-O-(5'-adenylyl)-L-seryl-[protein] + diphosphate. The enzyme catalyses L-threonyl-[protein] + ATP = 3-O-(5'-adenylyl)-L-threonyl-[protein] + diphosphate. It catalyses the reaction L-tyrosyl-[protein] + ATP = O-(5'-adenylyl)-L-tyrosyl-[protein] + diphosphate. It carries out the reaction L-histidyl-[protein] + UTP = N(tele)-(5'-uridylyl)-L-histidyl-[protein] + diphosphate. The catalysed reaction is L-seryl-[protein] + UTP = O-(5'-uridylyl)-L-seryl-[protein] + diphosphate. The enzyme catalyses L-tyrosyl-[protein] + UTP = O-(5'-uridylyl)-L-tyrosyl-[protein] + diphosphate. Functionally, nucleotidyltransferase involved in the post-translational modification of proteins. It can catalyze the addition of adenosine monophosphate (AMP) or uridine monophosphate (UMP) to a protein, resulting in modifications known as AMPylation and UMPylation. The sequence is that of Protein nucleotidyltransferase YdiU from Burkholderia ambifaria (strain MC40-6).